Reading from the N-terminus, the 414-residue chain is MIKAQSLDGLFEKLLDGKSIFKNKEVLRPSYTPDLLLHRNEQINSLATILVSALRGETPSNVLIYGKTGTGKTAVTRYVGKELERVSEDKSLFCSVVYINCEVIDTQYRLLANLARHFEEEVPMTGWPTDQVFMKFKEAIDARDQVIIIILDEIDKLIKKGDDVLYNLSRINTDLRKAKVSMIGVSNDLKFTEFLDPRVKSSLGEEELIFPPYDAEQISDILKQRAKMAYNDGVLGEMVIPLCAAFAAQEHGDARRALDLLRVSGEIAERENQPQVLEEHVRRAQEKIEIDRVVEVVRTLPTQSKLVLYSIILLRSRGREGKNVTTGEMYNVYRQLCHHIDVDILTQRRVTDLMSELDMLGIVNAVVVSKGRYGRTKEISLSVPVENTRKVLLEDYRLKPLVDFKTAVFNKMFS.

Residues 70–74, Tyr213, and Arg225 each bind ATP; that span reads TGKTA.

This sequence belongs to the CDC6/cdc18 family.

Functionally, involved in regulation of DNA replication. The protein is ORC1-type DNA replication protein 1 (cdc6-1) of Methanosarcina acetivorans (strain ATCC 35395 / DSM 2834 / JCM 12185 / C2A).